Consider the following 458-residue polypeptide: RuvB-like helicase 1 (458 aa).

The disordered stretch occupies residues 1 to 29 (MVQISEVKGNSRDNRTAAHTHIKGLGLRP). Residue 71 to 78 (GGPGTGKT) coordinates ATP.

Belongs to the RuvB family. In terms of assembly, may form heterododecamers with RVB2. Component of the SWR1 chromatin remodeling complex, the INO80 chromatin remodeling complex, and of the R2TP complex.

It localises to the nucleus. It catalyses the reaction ATP + H2O = ADP + phosphate + H(+). Functionally, DNA helicase which participates in several chromatin remodeling complexes, including the SWR1 and the INO80 complexes. The SWR1 complex mediates the ATP-dependent exchange of histone H2A for the H2A variant HZT1 leading to transcriptional regulation of selected genes by chromatin remodeling. The INO80 complex remodels chromatin by shifting nucleosomes and is involved in DNA repair. Also involved in pre-rRNA processing. This Emericella nidulans (strain FGSC A4 / ATCC 38163 / CBS 112.46 / NRRL 194 / M139) (Aspergillus nidulans) protein is RuvB-like helicase 1 (rvb1).